The primary structure comprises 239 residues: Ribosomal RNA small subunit methyltransferase G (239 aa).

S-adenosyl-L-methionine-binding positions include glycine 77, phenylalanine 82, 128-129, and arginine 147; that span reads AE.

This sequence belongs to the methyltransferase superfamily. RNA methyltransferase RsmG family.

The protein resides in the cytoplasm. Functionally, specifically methylates the N7 position of guanine in position 535 of 16S rRNA. This chain is Ribosomal RNA small subunit methyltransferase G, found in Bacillus anthracis (strain A0248).